The primary structure comprises 208 residues: Dephospho-CoA kinase (208 aa).

The region spanning 5-201 (IVALTGGIGS…QRYLALAASA (197 aa)) is the DPCK domain. 13–18 (GSGKST) contributes to the ATP binding site.

The protein belongs to the CoaE family.

The protein resides in the cytoplasm. It carries out the reaction 3'-dephospho-CoA + ATP = ADP + CoA + H(+). Its pathway is cofactor biosynthesis; coenzyme A biosynthesis; CoA from (R)-pantothenate: step 5/5. In terms of biological role, catalyzes the phosphorylation of the 3'-hydroxyl group of dephosphocoenzyme A to form coenzyme A. This is Dephospho-CoA kinase from Sodalis glossinidius (strain morsitans).